The following is a 220-amino-acid chain: Guanylate kinase (220 aa).

A Guanylate kinase-like domain is found at 3–180 (GRLFVMTGAS…AVADFLAILT (178 aa)). ATP is bound at residue 10–17 (GASGVGKG).

It belongs to the guanylate kinase family.

The protein resides in the cytoplasm. The enzyme catalyses GMP + ATP = GDP + ADP. Its function is as follows. Essential for recycling GMP and indirectly, cGMP. In Thermus thermophilus (strain ATCC BAA-163 / DSM 7039 / HB27), this protein is Guanylate kinase.